Reading from the N-terminus, the 153-residue chain is Heavy metal-associated isoprenylated plant protein 26 (153 aa).

The HMA domain occupies 25–89; the sequence is LQTVEIKVKM…MSHRTGKKVE (65 aa). Residues cysteine 36 and cysteine 39 each contribute to the a metal cation site. Cysteine 150 is modified (cysteine methyl ester). A lipid anchor (S-farnesyl cysteine) is attached at cysteine 150. Positions 151 to 153 are cleaved as a propeptide — removed in mature form; sequence VVM.

This sequence belongs to the HIPP family. Interacts with ZHD11/HB29 and ACBP2 (via ankyrin repeats). May also interact with HB21. Expressed in roots, stems and flowers. Lower expression in siliques and leaves. Expressed in the vascular tissues. Detected in lateral roots, shoot apical meristem, petals of unopened flowers and weak expression in leaf vasculature.

Its subcellular location is the nucleus membrane. It is found in the cell membrane. In terms of biological role, heavy-metal-binding protein. Binds lead, cadmium and copper. May be involved in heavy-metal transport. May be involved in cadmium transport and play a role in cadmium detoxification. The chain is Heavy metal-associated isoprenylated plant protein 26 from Arabidopsis thaliana (Mouse-ear cress).